A 326-amino-acid polypeptide reads, in one-letter code: Glycerol-3-phosphate dehydrogenase [NAD(P)+] (326 aa).

Trp15, Arg35, and Lys107 together coordinate NADPH. Residues Lys107, Gly135, and Ser137 each coordinate sn-glycerol 3-phosphate. Ala139 serves as a coordination point for NADPH. Lys190, Asp243, Ser253, Arg254, and Asn255 together coordinate sn-glycerol 3-phosphate. Lys190 (proton acceptor) is an active-site residue. NADPH is bound at residue Arg254. Leu273 and Glu275 together coordinate NADPH.

Belongs to the NAD-dependent glycerol-3-phosphate dehydrogenase family.

The protein localises to the cytoplasm. The enzyme catalyses sn-glycerol 3-phosphate + NAD(+) = dihydroxyacetone phosphate + NADH + H(+). It catalyses the reaction sn-glycerol 3-phosphate + NADP(+) = dihydroxyacetone phosphate + NADPH + H(+). Its pathway is membrane lipid metabolism; glycerophospholipid metabolism. In terms of biological role, catalyzes the reduction of the glycolytic intermediate dihydroxyacetone phosphate (DHAP) to sn-glycerol 3-phosphate (G3P), the key precursor for phospholipid synthesis. The sequence is that of Glycerol-3-phosphate dehydrogenase [NAD(P)+] from Bradyrhizobium sp. (strain BTAi1 / ATCC BAA-1182).